A 177-amino-acid chain; its full sequence is Putative adenylate kinase (177 aa).

ATP-binding residues include Gly-10, Gly-12, Lys-13, Thr-14, and Thr-15. Residues 30-50 form an NMP region; that stretch reads SLRDYAIEKGIGEMKGDELEV. The segment at 99–109 is LID; it reads ERGYSREKVGE. ATP-binding residues include Arg-100 and Lys-138.

Belongs to the adenylate kinase family. AK6 subfamily. As to quaternary structure, interacts with uS11. Not a structural component of 40S pre-ribosomes, but transiently interacts with them by binding to uS11.

The catalysed reaction is AMP + ATP = 2 ADP. The enzyme catalyses ATP + H2O = ADP + phosphate + H(+). Functionally, broad-specificity nucleoside monophosphate (NMP) kinase that catalyzes the reversible transfer of the terminal phosphate group between nucleoside triphosphates and monophosphates. Also has ATPase activity. Involved in the late maturation steps of the 30S ribosomal particles, specifically 16S rRNA maturation. While NMP activity is not required for ribosome maturation, ATPase activity is. Associates transiently with small ribosomal subunit protein uS11. ATP hydrolysis breaks the interaction with uS11. May temporarily remove uS11 from the ribosome to enable a conformational change of the ribosomal RNA that is needed for the final maturation step of the small ribosomal subunit. This is Putative adenylate kinase from Thermococcus gammatolerans (strain DSM 15229 / JCM 11827 / EJ3).